A 678-amino-acid chain; its full sequence is Glycine--tRNA ligase beta subunit (678 aa).

It belongs to the class-II aminoacyl-tRNA synthetase family. In terms of assembly, tetramer of two alpha and two beta subunits.

It localises to the cytoplasm. The catalysed reaction is tRNA(Gly) + glycine + ATP = glycyl-tRNA(Gly) + AMP + diphosphate. This is Glycine--tRNA ligase beta subunit from Streptococcus pneumoniae (strain Taiwan19F-14).